Here is a 1135-residue protein sequence, read N- to C-terminus: Putative beta-hexosaminidase (1135 aa).

An N-terminal signal peptide occupies residues 1-23; it reads MKWVKSGVGILGILLTICHAVTS. 2 disordered regions span residues 970–1082 and 1107–1135; these read AHPP…LPGQ and QMRG…QQAG. Positions 986–1003 are enriched in pro residues; it reads NMPPPFPPRPPFGPPMLP. Composition is skewed to low complexity over residues 1004–1026 and 1043–1073; these read PGQM…TALG and TGQA…LPGQ.

Belongs to the glycosyl hydrolase 20 family. In terms of tissue distribution, prismatic layer of shell (at protein level). Expressed primarily in the mantle with highest level in the mantle edge and lower level in the mantle pallium.

Its subcellular location is the secreted. It catalyses the reaction Hydrolysis of terminal non-reducing N-acetyl-D-hexosamine residues in N-acetyl-beta-D-hexosaminides.. Its pathway is glycan degradation; chitin degradation. The polypeptide is Putative beta-hexosaminidase (Margaritifera margaritifera (Freshwater pearl mussel)).